The following is a 288-amino-acid chain: F420-non-reducing hydrogenase vhu subunit G (288 aa).

Belongs to the [NiFe]/[NiFeSe] hydrogenase small subunit family. As to quaternary structure, the F420-non-reducing hydrogenase vhu is composed of four subunits; VhuA, VhuD, VhuG and VhuU.

The sequence is that of F420-non-reducing hydrogenase vhu subunit G (vhuG) from Methanocaldococcus jannaschii (strain ATCC 43067 / DSM 2661 / JAL-1 / JCM 10045 / NBRC 100440) (Methanococcus jannaschii).